We begin with the raw amino-acid sequence, 941 residues long: Isoleucine--tRNA ligase (941 aa).

Residues 58 to 68 carry the 'HIGH' region motif; sequence PYANGNIHLGH. Residue Glu-564 coordinates L-isoleucyl-5'-AMP. The short motif at 605-609 is the 'KMSKS' region element; the sequence is KMSKS. Lys-608 is a binding site for ATP. The Zn(2+) site is built by Cys-904, Cys-907, Cys-924, and Cys-927.

Belongs to the class-I aminoacyl-tRNA synthetase family. IleS type 1 subfamily. As to quaternary structure, monomer. It depends on Zn(2+) as a cofactor.

Its subcellular location is the cytoplasm. It catalyses the reaction tRNA(Ile) + L-isoleucine + ATP = L-isoleucyl-tRNA(Ile) + AMP + diphosphate. Its function is as follows. Catalyzes the attachment of isoleucine to tRNA(Ile). As IleRS can inadvertently accommodate and process structurally similar amino acids such as valine, to avoid such errors it has two additional distinct tRNA(Ile)-dependent editing activities. One activity is designated as 'pretransfer' editing and involves the hydrolysis of activated Val-AMP. The other activity is designated 'posttransfer' editing and involves deacylation of mischarged Val-tRNA(Ile). The polypeptide is Isoleucine--tRNA ligase (Hahella chejuensis (strain KCTC 2396)).